Here is a 312-residue protein sequence, read N- to C-terminus: DDRGK domain-containing protein 1 (312 aa).

The Lumenal portion of the chain corresponds to 1–2; it reads ME. A helical membrane pass occupies residues 3-23; the sequence is LIILVGIAIALLVVIITLYLL. Residues 24–312 are Cytoplasmic-facing; it reads QKKNAAPETK…ISAGGEEASS (289 aa). Residues 30–163 are disordered; the sequence is PETKPAAAPQ…KQQEDLEAEV (134 aa). Over residues 52–85 the composition is skewed to low complexity; that stretch reads RRAQIARNQRNRLRQNAPAAPAGQVAPAAGAPAA. Acidic residues predominate over residues 90–99; that stretch reads DHEDEGQVDA. The span at 110 to 163 shows a compositional bias: basic and acidic residues; sequence LDEKMGAKKRAKMEAKEQKRLQREQELHDREQRKVKEAKEEAERKQQEDLEAEV.

It belongs to the DDRGK1 family. Interacts with Atg9; the interaction is transient.

Its subcellular location is the endoplasmic reticulum membrane. Substrate adapter for ufmylation, the covalent attachment of the ubiquitin-like modifier UFM1 to substrate proteins. Required for ufmylation of Atg9; protects the nervous system during aging, possibly by stabilizing Atg9 and supporting its function. In Drosophila erecta (Fruit fly), this protein is DDRGK domain-containing protein 1.